We begin with the raw amino-acid sequence, 191 residues long: MFVLKSASPRRKQILFDLGFDLKIDPEHIDESQKELESPLEYLERMVHSKLGTLFEPNNVYLAADTIVVYQNQILHKPIDTNDAFRILKILSGKNHSVFSGAALRHPNGTEYFYEETMIGFQNWNDFEINEYIKRSKPFDKAGSYGIQDKEGPVLQWIGSYTNVMGFPLRSFLSRHELWIGSWEERIMRRD.

The active-site Proton acceptor is D65.

Belongs to the Maf family. YhdE subfamily. A divalent metal cation serves as cofactor.

It localises to the cytoplasm. It carries out the reaction dTTP + H2O = dTMP + diphosphate + H(+). The enzyme catalyses UTP + H2O = UMP + diphosphate + H(+). Nucleoside triphosphate pyrophosphatase that hydrolyzes dTTP and UTP. May have a dual role in cell division arrest and in preventing the incorporation of modified nucleotides into cellular nucleic acids. The sequence is that of dTTP/UTP pyrophosphatase from Leptospira biflexa serovar Patoc (strain Patoc 1 / Ames).